A 427-amino-acid polypeptide reads, in one-letter code: Glutamate-1-semialdehyde 2,1-aminomutase (427 aa).

N6-(pyridoxal phosphate)lysine is present on Lys268.

The protein belongs to the class-III pyridoxal-phosphate-dependent aminotransferase family. HemL subfamily. It depends on pyridoxal 5'-phosphate as a cofactor.

Its subcellular location is the cytoplasm. It catalyses the reaction (S)-4-amino-5-oxopentanoate = 5-aminolevulinate. It participates in porphyrin-containing compound metabolism; protoporphyrin-IX biosynthesis; 5-aminolevulinate from L-glutamyl-tRNA(Glu): step 2/2. This chain is Glutamate-1-semialdehyde 2,1-aminomutase, found in Methanococcus maripaludis (strain DSM 14266 / JCM 13030 / NBRC 101832 / S2 / LL).